A 321-amino-acid chain; its full sequence is Methionyl-tRNA formyltransferase (321 aa).

Residue 111–114 coordinates (6S)-5,6,7,8-tetrahydrofolate; it reads SLLP.

The protein belongs to the Fmt family.

The catalysed reaction is L-methionyl-tRNA(fMet) + (6R)-10-formyltetrahydrofolate = N-formyl-L-methionyl-tRNA(fMet) + (6S)-5,6,7,8-tetrahydrofolate + H(+). In terms of biological role, attaches a formyl group to the free amino group of methionyl-tRNA(fMet). The formyl group appears to play a dual role in the initiator identity of N-formylmethionyl-tRNA by promoting its recognition by IF2 and preventing the misappropriation of this tRNA by the elongation apparatus. The polypeptide is Methionyl-tRNA formyltransferase (Bifidobacterium animalis subsp. lactis (strain AD011)).